A 228-amino-acid chain; its full sequence is Cytidylate kinase (228 aa).

Residue 10-18 coordinates ATP; it reads GPSGSGKGT.

Belongs to the cytidylate kinase family. Type 1 subfamily.

The protein resides in the cytoplasm. The catalysed reaction is CMP + ATP = CDP + ADP. It catalyses the reaction dCMP + ATP = dCDP + ADP. The polypeptide is Cytidylate kinase (Acinetobacter baumannii (strain AB0057)).